The primary structure comprises 984 residues: Glycine dehydrogenase (decarboxylating) (984 aa).

Lysine 702 carries the post-translational modification N6-(pyridoxal phosphate)lysine.

It belongs to the GcvP family. In terms of assembly, the glycine cleavage system is composed of four proteins: P, T, L and H. It depends on pyridoxal 5'-phosphate as a cofactor.

The enzyme catalyses N(6)-[(R)-lipoyl]-L-lysyl-[glycine-cleavage complex H protein] + glycine + H(+) = N(6)-[(R)-S(8)-aminomethyldihydrolipoyl]-L-lysyl-[glycine-cleavage complex H protein] + CO2. Its function is as follows. The glycine cleavage system catalyzes the degradation of glycine. The P protein binds the alpha-amino group of glycine through its pyridoxal phosphate cofactor; CO(2) is released and the remaining methylamine moiety is then transferred to the lipoamide cofactor of the H protein. The polypeptide is Glycine dehydrogenase (decarboxylating) (Xanthomonas oryzae pv. oryzae (strain MAFF 311018)).